The chain runs to 227 residues: ATP synthase subunit delta (227 aa).

It belongs to the ATPase delta chain family. In terms of assembly, F-type ATPases have 2 components, F(1) - the catalytic core - and F(0) - the membrane proton channel. F(1) has five subunits: alpha(3), beta(3), gamma(1), delta(1), epsilon(1). F(0) has three main subunits: a(1), b(2) and c(10-14). The alpha and beta chains form an alternating ring which encloses part of the gamma chain. F(1) is attached to F(0) by a central stalk formed by the gamma and epsilon chains, while a peripheral stalk is formed by the delta and b chains.

It localises to the cell inner membrane. F(1)F(0) ATP synthase produces ATP from ADP in the presence of a proton or sodium gradient. F-type ATPases consist of two structural domains, F(1) containing the extramembraneous catalytic core and F(0) containing the membrane proton channel, linked together by a central stalk and a peripheral stalk. During catalysis, ATP synthesis in the catalytic domain of F(1) is coupled via a rotary mechanism of the central stalk subunits to proton translocation. Its function is as follows. This protein is part of the stalk that links CF(0) to CF(1). It either transmits conformational changes from CF(0) to CF(1) or is implicated in proton conduction. The chain is ATP synthase subunit delta from Rhodopirellula baltica (strain DSM 10527 / NCIMB 13988 / SH1).